The primary structure comprises 245 residues: Probable phosphatase PC1_1798 (245 aa).

Positions 7, 9, 15, 40, 73, 101, 131, 192, and 194 each coordinate Zn(2+).

The protein belongs to the PHP family. In terms of assembly, homotrimer. Requires Zn(2+) as cofactor.

This chain is Probable phosphatase PC1_1798, found in Pectobacterium carotovorum subsp. carotovorum (strain PC1).